The chain runs to 483 residues: Glutamyl-tRNA(Gln) amidotransferase subunit A (483 aa).

Catalysis depends on charge relay system residues Lys-76 and Ser-151. Catalysis depends on Ser-175, which acts as the Acyl-ester intermediate.

Belongs to the amidase family. GatA subfamily. As to quaternary structure, heterotrimer of A, B and C subunits.

The enzyme catalyses L-glutamyl-tRNA(Gln) + L-glutamine + ATP + H2O = L-glutaminyl-tRNA(Gln) + L-glutamate + ADP + phosphate + H(+). In terms of biological role, allows the formation of correctly charged Gln-tRNA(Gln) through the transamidation of misacylated Glu-tRNA(Gln) in organisms which lack glutaminyl-tRNA synthetase. The reaction takes place in the presence of glutamine and ATP through an activated gamma-phospho-Glu-tRNA(Gln). The protein is Glutamyl-tRNA(Gln) amidotransferase subunit A of Pseudomonas fluorescens (strain SBW25).